Reading from the N-terminus, the 141-residue chain is Large ribosomal subunit protein uL11 (141 aa).

It belongs to the universal ribosomal protein uL11 family. In terms of assembly, part of the ribosomal stalk of the 50S ribosomal subunit. Interacts with L10 and the large rRNA to form the base of the stalk. L10 forms an elongated spine to which L12 dimers bind in a sequential fashion forming a multimeric L10(L12)X complex. In terms of processing, one or more lysine residues are methylated.

Its function is as follows. Forms part of the ribosomal stalk which helps the ribosome interact with GTP-bound translation factors. This Latilactobacillus sakei subsp. sakei (strain 23K) (Lactobacillus sakei subsp. sakei) protein is Large ribosomal subunit protein uL11.